A 161-amino-acid chain; its full sequence is Monooxygenase AgnL5 (161 aa).

Belongs to the avfA family.

It participates in secondary metabolite biosynthesis. Its function is as follows. Monooxygenase; part of the gene cluster that mediates the biosynthesis of agnestins, dihydroxy-xanthone metabolites. The pathway begins with the assembly and cyclization of atrochrysone thioester by the non-reducing polyketide synthase Agnpks1. The atrochrysone carboxyl ACP thioesterase AgnL7 then breaks the thioester bond and releases the atrochrysone carboxylic acid as the first enzyme-free intermediate. The decarboxylase AgnL1 then catalyzes the concerted decarboxylation-elimination required to convert atochrysone carboxylic acid into emodin anthrone, which is further oxidized to emodin by the anthrone oxygenase AgnL2. Emodin then undergoes reduction catalyzed by the oxidoreductase AgnL4 to yield the dihydroquinone tautomer which is the substrate for reduction by the short chain dehydrogenase AgnL6 reduction to produce hydroxyketone, followed by AgnL8 dehydration and likely spontaneous autoxidation to chrysophanol. Baeyer-Villiger oxidation by the oxidase AgnL3 leads to monodictyphenone via cleavage of the C-10/C-10a bond of chrysophanol. Alternative cleavage at the C-4a/C-10 bond of chrysophanol also leads to the formation some cephalone F. Further conversion to agnestins A and B, requires reduction to dihydro-monodictyphenone, oxidation to agnestin C probably via an epoxide, and rearrangement to either agnestin A or agnestin B directly, although agnestin A or agnestin B can also interconvert. Within the cluster, AgnR1 is the only unassigned oxidoreductase present which could be involved in this conversion. However, AgnR1 seems not to be involved in this step, and thus genes involved in the proposed oxidation/reduction may be located elsewhere on the genome. Further agnestin A derivatives are probably formed by spontaneous decarboxylations, dehydrations and methanolysis reactions. The sequence is that of Monooxygenase AgnL5 from Paecilomyces divaricatus (Penicillium divaricatum).